A 208-amino-acid polypeptide reads, in one-letter code: Methyl-CpG-binding domain protein 3-like 5 (208 aa).

Belongs to the MBD3L family.

The protein is Methyl-CpG-binding domain protein 3-like 5 (MBD3L5) of Homo sapiens (Human).